The following is a 414-amino-acid chain: Enolase (414 aa).

Glutamine 162 is a binding site for (2R)-2-phosphoglycerate. Glutamate 204 serves as the catalytic Proton donor. Mg(2+)-binding residues include aspartate 239, glutamate 280, and aspartate 307. Residues lysine 332, arginine 361, serine 362, and lysine 383 each coordinate (2R)-2-phosphoglycerate. Lysine 332 acts as the Proton acceptor in catalysis.

Belongs to the enolase family. It depends on Mg(2+) as a cofactor.

It localises to the cytoplasm. It is found in the secreted. The protein resides in the cell surface. It carries out the reaction (2R)-2-phosphoglycerate = phosphoenolpyruvate + H2O. It participates in carbohydrate degradation; glycolysis; pyruvate from D-glyceraldehyde 3-phosphate: step 4/5. In terms of biological role, catalyzes the reversible conversion of 2-phosphoglycerate (2-PG) into phosphoenolpyruvate (PEP). It is essential for the degradation of carbohydrates via glycolysis. This chain is Enolase, found in Campylobacter jejuni subsp. jejuni serotype O:6 (strain 81116 / NCTC 11828).